The chain runs to 83 residues: Putative defensin-like protein 111 (83 aa).

Residues 1-24 form the signal peptide; sequence MAITKKILLPFVLTILFVISSVHC. 4 disulfides stabilise this stretch: Cys-40–Cys-80, Cys-46–Cys-69, Cys-54–Cys-78, and Cys-58–Cys-79.

Belongs to the DEFL family.

The protein localises to the secreted. This is Putative defensin-like protein 111 (LCR50) from Arabidopsis thaliana (Mouse-ear cress).